Reading from the N-terminus, the 562-residue chain is Arginine--tRNA ligase (562 aa).

The 'HIGH' region motif lies at 121–131; it reads PNIAKPMGMGH.

This sequence belongs to the class-I aminoacyl-tRNA synthetase family. Monomer.

It is found in the cytoplasm. It carries out the reaction tRNA(Arg) + L-arginine + ATP = L-arginyl-tRNA(Arg) + AMP + diphosphate. The polypeptide is Arginine--tRNA ligase (Limosilactobacillus fermentum (strain NBRC 3956 / LMG 18251) (Lactobacillus fermentum)).